Consider the following 274-residue polypeptide: tRNA pseudouridine synthase A (274 aa).

Aspartate 52 functions as the Nucleophile in the catalytic mechanism. Tyrosine 110 is a binding site for substrate.

Belongs to the tRNA pseudouridine synthase TruA family. As to quaternary structure, homodimer.

It catalyses the reaction uridine(38/39/40) in tRNA = pseudouridine(38/39/40) in tRNA. In terms of biological role, formation of pseudouridine at positions 38, 39 and 40 in the anticodon stem and loop of transfer RNAs. The polypeptide is tRNA pseudouridine synthase A (Ralstonia nicotianae (strain ATCC BAA-1114 / GMI1000) (Ralstonia solanacearum)).